The following is a 289-amino-acid chain: D-alanine aminotransferase (289 aa).

Position 31 (tyrosine 31) interacts with substrate. Position 50 (arginine 50) interacts with pyridoxal 5'-phosphate. Substrate contacts are provided by arginine 99 and histidine 101. Lysine 147 functions as the Proton acceptor in the catalytic mechanism. Lysine 147 bears the N6-(pyridoxal phosphate)lysine mark. Position 179 (glutamate 179) interacts with pyridoxal 5'-phosphate.

The protein belongs to the class-IV pyridoxal-phosphate-dependent aminotransferase family. In terms of assembly, homodimer. Pyridoxal 5'-phosphate is required as a cofactor.

The catalysed reaction is D-alanine + 2-oxoglutarate = D-glutamate + pyruvate. In terms of biological role, acts on the D-isomers of alanine, leucine, aspartate, glutamate, aminobutyrate, norvaline and asparagine. The enzyme transfers an amino group from a substrate D-amino acid to the pyridoxal phosphate cofactor to form pyridoxamine and an alpha-keto acid in the first half-reaction. The second half-reaction is the reverse of the first, transferring the amino group from the pyridoxamine to a second alpha-keto acid to form the product D-amino acid via a ping-pong mechanism. This is an important process in the formation of D-alanine and D-glutamate, which are essential bacterial cell wall components. The polypeptide is D-alanine aminotransferase (dat) (Listeria innocua serovar 6a (strain ATCC BAA-680 / CLIP 11262)).